The sequence spans 629 residues: MHFHERFDVIVVGGGHAGTEAALAAARMGSKTLLLTHNIDTLGQMSCNPAIGGIGKGHLVKEIDALGGAMAIATDYAGIQFRTLNSSKGPAVRATRAQADRALYRQKIQNILQNQPNLRIFQQAVDDLIVENHQVVGVVTQMGLAFESPAVVLTTGTFLSGKIHIGLENYSGGRAGDPPAIALANRLRELPIRVGRLKTGTPPRIDANTIDFSQMAEQKGDSPLPVMSFMGDVSHHPKQISCWITHTNEKTHEIIRGGLDRSPMYSGVIEGIGPRYCPSIEDKIHRFADKSSHQIFIEPEGLNTNEIYPNGISTSLPFDVQLNLVRSIKGMENAEIMRPGYAIEYDYFDPRDLKNSLETKAINGLFFAGQINGTTGYEEAGAQGLLAGMNASLQVQGKEAWCPRRDEAYLGVLVDDLSTLGTKEPYRMFTSRAEYRLLLREDNADIRLTAKGRELGLVDDARWAAFSEKLESIELELQRLRGQWVHPNSPLIHALNPHLNTPISREASFEELLRRPEMDYSKLMQIEGFGPGLEDPQAAEQVQIQVKYSGYIQRQQEEINKAVRNENTGLPLTLDYKEVPGLSNEVIAKLNNHKPETIGQASRISGITPAAISILLVHLKKRGLLRKSA.

Residue 13-18 (GGGHAG) coordinates FAD. Residue 273–287 (GPRYCPSIEDKIHRF) coordinates NAD(+).

It belongs to the MnmG family. In terms of assembly, homodimer. Heterotetramer of two MnmE and two MnmG subunits. The cofactor is FAD.

It localises to the cytoplasm. Functionally, NAD-binding protein involved in the addition of a carboxymethylaminomethyl (cmnm) group at the wobble position (U34) of certain tRNAs, forming tRNA-cmnm(5)s(2)U34. This chain is tRNA uridine 5-carboxymethylaminomethyl modification enzyme MnmG, found in Shewanella baltica (strain OS223).